Reading from the N-terminus, the 427-residue chain is C4-dicarboxylate transport protein (427 aa).

Helical transmembrane passes span 5–25 (IFSS…FLGH), 44–64 (LIKM…IAGM), 76–96 (IALL…LCVV), 142–162 (IGAF…LFGF), 184–206 (VIFG…AMAF), 222–242 (LIAC…GSIA), 307–327 (IYLT…LDLF), 330–350 (ITLL…TGSG), and 352–372 (IVLA…LALI).

It belongs to the dicarboxylate/amino acid:cation symporter (DAACS) (TC 2.A.23) family.

The protein resides in the cell inner membrane. In terms of biological role, responsible for the transport of dicarboxylates such as succinate, fumarate, and malate from the periplasm across the membrane. This is C4-dicarboxylate transport protein from Aeromonas salmonicida (strain A449).